A 1456-amino-acid chain; its full sequence is Sterol 3-beta-glucosyltransferase (1456 aa).

The span at 60–70 (ESDEEDGDEVE) shows a compositional bias: acidic residues. Disordered regions lie at residues 60–113 (ESDE…SISH) and 128–156 (LSPHSLCHTSSHEASRRGSAEQPSRTQSE). Low complexity predominate over residues 71 to 104 (TPSTTTTAVSPSATMSAPSPTATAPTPHSGTHTP). Residues 137–146 (SSHEASRRGS) are compositionally biased toward basic and acidic residues. The 48-residue stretch at 200-247 (QKLKGFAALDVDEQLIADYPVWLLKNVLIQGHLYITAKHMCFLSYLPR) folds into the GRAM 1 domain. In terms of domain architecture, PH spans 251-351 (ANIRSGTLVK…WVKALQKEIF (101 aa)). Disordered stretches follow at residues 462-512 (HSAH…PRLP) and 524-776 (DKCD…QDTF). Residues 496–508 (QPHERDEKRDSKL) show a composition bias toward basic and acidic residues. Positions 556-567 (LASQRTSSSTLF) are enriched in polar residues. 2 stretches are compositionally biased toward low complexity: residues 576–606 (SQPTTPGVHAPGSSTPGGSYGTTTPGTPASA) and 647–676 (GGATSSGAATGATTPGGAAAPGSTGNSSPG). Gly residues predominate over residues 677-696 (TPGGLGGPGAVGAGGPGVMG). Residues 719-735 (APHDPAAAAAAADAAAP) are compositionally biased toward low complexity. A GRAM 2 domain is found at 827–893 (ERFQKRFALG…KVVENATKDS (67 aa)). UDP-alpha-D-glucose-binding residues include Ser1004, Arg1005, Asp1007, Asn1279, Asn1307, His1310, His1323, Ser1326, Gly1327, Thr1328, Asp1347, and Gln1348.

It belongs to the glycosyltransferase 28 family.

It localises to the cytoplasm. The protein resides in the membrane. The enzyme catalyses a sterol + UDP-alpha-D-glucose = a sterol 3-beta-D-glucoside + UDP + H(+). It carries out the reaction ergosterol + UDP-alpha-D-glucose = ergosteryl 3-beta-D-glucoside + UDP + H(+). In terms of biological role, sterol glycosyltransferase responsible for the glycosylation of ergosterol to form ergosterol-glucoside. In Yarrowia lipolytica (strain CLIB 122 / E 150) (Yeast), this protein is Sterol 3-beta-glucosyltransferase.